A 1976-amino-acid chain; its full sequence is Myosin-10 (1976 aa).

The residue at position 18 (Arg18) is an Omega-N-methylarginine. The Myosin N-terminal SH3-like domain occupies 31-81; sequence TAKKLVWIPSERHGFEAASIKEERGDEVMVELAENGKKAMVNKDDIQKMNP. The Myosin motor domain occupies 85–783; the sequence is SKVEDMAELT…VLAHLEEERD (699 aa). 178 to 185 contributes to the ATP binding site; that stretch reads GESGAGKT. Lys442 carries the N6-acetyllysine modification. Positions 661-683 are actin-binding; that stretch reads LTKLMATLRNTNPNFVRCIIPNH. The IQ domain maps to 786–815; it reads ITDIIIFFQAVCRGYLARKAFAKKQQQLSA. Residues 845 to 1976 are a coiled coil; that stretch reads LQVTRQEEEL…VNDTQPPQSE (1132 aa). Residues 1125 to 1175 are disordered; the sequence is EDFESEKASRNKAEKQKRDLSEELEALKTELEDTLDTTAAQQELRTKREQE. A compositionally biased stretch (basic and acidic residues) spans 1129 to 1155; sequence SEKASRNKAEKQKRDLSEELEALKTEL. Position 1145 is a phosphoserine (Ser1145). 3 positions are modified to N6-acetyllysine: Lys1241, Lys1301, and Lys1645. Disordered regions lie at residues 1697 to 1718 and 1874 to 1976; these read ASSERARRHAEQERDELADEIA and KANA…PQSE. A compositionally biased stretch (basic and acidic residues) spans 1698–1708; that stretch reads SSERARRHAEQ. Residue Arg1930 is modified to Omega-N-methylarginine. Phosphoserine occurs at positions 1935, 1937, 1938, and 1939. Arg1940 carries the post-translational modification Omega-N-methylarginine. 2 positions are modified to phosphoserine: Ser1952 and Ser1956. Phosphothreonine is present on Thr1960. Polar residues predominate over residues 1967–1976; it reads VNDTQPPQSE. Ser1975 carries the post-translational modification Phosphoserine.

This sequence belongs to the TRAFAC class myosin-kinesin ATPase superfamily. Myosin family. In terms of assembly, myosin is a hexameric protein that consists of 2 heavy chain subunits (MHC), 2 alkali light chain subunits (MLC) and 2 regulatory light chain subunits (MLC-2). Interacts with PLEKHG6. Interacts with ECPAS. Interacts with LARP6. Interacts with MCC. Interacts with KIF26B. Interacts with CFAP95. Phosphorylated by ABL2. In terms of tissue distribution, in newborn kidney, expressed in the mesenchyme and ureteric buds.

The protein localises to the cell projection. Its subcellular location is the lamellipodium. In terms of biological role, involved with LARP6 in the stabilization of type I collagen mRNAs for CO1A1 and CO1A2. During cell spreading, plays an important role in cytoskeleton reorganization, focal contacts formation (in the central part but not the margins of spreading cells), and lamellipodial extension; this function is mechanically antagonized by MYH9. Cellular myosin that appears to play a role in cytokinesis, cell shape, and specialized functions such as secretion and capping. The sequence is that of Myosin-10 (Myh10) from Mus musculus (Mouse).